The following is a 135-amino-acid chain: Basic phospholipase A2 6 (135 aa).

Disulfide bonds link cysteine 28–cysteine 87, cysteine 42–cysteine 134, cysteine 44–cysteine 60, cysteine 59–cysteine 115, cysteine 66–cysteine 108, cysteine 76–cysteine 101, and cysteine 94–cysteine 106. The Ca(2+) site is built by tyrosine 43, glycine 45, and glycine 47. Histidine 63 is a catalytic residue. Aspartate 64 lines the Ca(2+) pocket. The active site involves aspartate 109.

The protein belongs to the phospholipase A2 family. Group I subfamily. D49 sub-subfamily. Ca(2+) is required as a cofactor. In terms of tissue distribution, expressed by the venom gland.

It is found in the secreted. The catalysed reaction is a 1,2-diacyl-sn-glycero-3-phosphocholine + H2O = a 1-acyl-sn-glycero-3-phosphocholine + a fatty acid + H(+). Snake venom phospholipase A2 (PLA2) that inhibits neuromuscular transmission by blocking acetylcholine release from the nerve termini. PLA2 catalyzes the calcium-dependent hydrolysis of the 2-acyl groups in 3-sn-phosphoglycerides. Very weakly suppress the acetylcholine (ACh)-evoked current mediated by alpha-7-similar nAChRs in L.stagnalis neurons. The protein is Basic phospholipase A2 6 of Bungarus fasciatus (Banded krait).